We begin with the raw amino-acid sequence, 417 residues long: Serine hydroxymethyltransferase (417 aa).

Residues Leu-121 and 125 to 127 (GHL) each bind (6S)-5,6,7,8-tetrahydrofolate. At Lys-229 the chain carries N6-(pyridoxal phosphate)lysine. 355–357 (SPF) lines the (6S)-5,6,7,8-tetrahydrofolate pocket.

This sequence belongs to the SHMT family. As to quaternary structure, homodimer. Requires pyridoxal 5'-phosphate as cofactor.

The protein localises to the cytoplasm. It catalyses the reaction (6R)-5,10-methylene-5,6,7,8-tetrahydrofolate + glycine + H2O = (6S)-5,6,7,8-tetrahydrofolate + L-serine. It functions in the pathway one-carbon metabolism; tetrahydrofolate interconversion. The protein operates within amino-acid biosynthesis; glycine biosynthesis; glycine from L-serine: step 1/1. Catalyzes the reversible interconversion of serine and glycine with tetrahydrofolate (THF) serving as the one-carbon carrier. This reaction serves as the major source of one-carbon groups required for the biosynthesis of purines, thymidylate, methionine, and other important biomolecules. Also exhibits THF-independent aldolase activity toward beta-hydroxyamino acids, producing glycine and aldehydes, via a retro-aldol mechanism. This chain is Serine hydroxymethyltransferase, found in Xanthomonas campestris pv. campestris (strain 8004).